A 98-amino-acid polypeptide reads, in one-letter code: Large ribosomal subunit protein bL25 (98 aa).

Residues 1–23 are disordered; that stretch reads MANFVLNAQARAEDKQGKGASRR.

It belongs to the bacterial ribosomal protein bL25 family. Part of the 50S ribosomal subunit; part of the 5S rRNA/L5/L18/L25 subcomplex. Contacts the 5S rRNA. Binds to the 5S rRNA independently of L5 and L18.

Its function is as follows. This is one of the proteins that binds to the 5S RNA in the ribosome where it forms part of the central protuberance. The polypeptide is Large ribosomal subunit protein bL25 (Acinetobacter baumannii (strain ATCC 17978 / DSM 105126 / CIP 53.77 / LMG 1025 / NCDC KC755 / 5377)).